A 267-amino-acid polypeptide reads, in one-letter code: Undecaprenyl-diphosphatase (267 aa).

A run of 7 helical transmembrane segments spans residues 39–59 (QGLA…ILYF), 87–107 (WMIA…KDFI), 111–131 (LRSA…LWWV), 149–169 (ALFI…RSGA), 189–209 (FLMS…KLVT), 218–238 (ALSI…HAFL), and 244–264 (VGMM…IAFL).

The protein belongs to the UppP family.

It is found in the cell inner membrane. It carries out the reaction di-trans,octa-cis-undecaprenyl diphosphate + H2O = di-trans,octa-cis-undecaprenyl phosphate + phosphate + H(+). Functionally, catalyzes the dephosphorylation of undecaprenyl diphosphate (UPP). Confers resistance to bacitracin. This is Undecaprenyl-diphosphatase from Photobacterium profundum (strain SS9).